We begin with the raw amino-acid sequence, 489 residues long: WRKY transcription factor 72B (489 aa).

Disordered regions lie at residues 1-100 (MENK…EMRE), 131-159 (QKETDQKSSSTTVNTSTTHHDHESDQEAD), and 234-267 (DENEETSNKNLKTMRNNGDGDDVSQQNPTKRARV). 2 stretches are compositionally biased toward basic and acidic residues: residues 32–52 (GRKEREDDKSKPSSPHHKDYM) and 83–100 (THKEQDDQLASAKDEMRE). A coiled-coil region spans residues 84-132 (HKEQDDQLASAKDEMREVMEENQRLRMHLDRMMKEYRNLQNQFHDIVQK). Positions 138 to 147 (SSSTTVNTST) are enriched in low complexity. The segment at residues 273-339 (CDAPTMNDGC…YEGTHNHTLP (67 aa)) is a DNA-binding region (WRKY). 2 disordered regions span residues 356–381 (LLSGSSNSSDPNPQVTATTTTTPTTT) and 427–454 (TSTSSSSPSSLSHLNRMTQNFPPRYNYN). 2 stretches are compositionally biased toward low complexity: residues 371-381 (TATTTTTPTTT) and 427-438 (TSTSSSSPSSLS).

The protein belongs to the WRKY group II-b family.

It is found in the nucleus. Functionally, in association with WRKY72A, contributes to basal defense against root-knot nematodes (RKNs) and potato aphids, as well as Mi-1-mediated gene-for-gene resistance to these pests. Both WRKY72A and WRKY72B are not required for gene-for-gene resistance mediated by Pto, another tomato R gene. This is WRKY transcription factor 72B from Solanum lycopersicum (Tomato).